Consider the following 27-residue polypeptide: Secretin (27 aa).

L27 is modified (leucine amide).

The protein belongs to the glucagon family.

The protein resides in the secreted. Hormone involved in different processes, such as regulation of the pH of the duodenal content, food intake and water homeostasis. Exerts its biological effects by binding to secretin receptor (SCTR), a G-protein coupled receptor expressed in the basolateral domain of several cells. Acts as a key gastrointestinal hormone by regulating the pH of the duodenal content. Secreted by S cells of the duodenum in the crypts of Lieberkuehn and regulates the pH of the duodenum by (1) inhibiting the secretion of gastric acid from the parietal cells of the stomach and (2) stimulating the production of bicarbonate (NaHCO(3)) from the ductal cells of the pancreas. Production of bicarbonate is essential to neutralize the pH and ensure no damage is done to the small intestine by the gastric acid. In addition to regulating the pH of the duodenal content, plays a central role in diet induced thermogenesis: acts as a non-sympathetic brown fat (BAT) activator mediating prandial thermogenesis, which consequentially induces satiation. Mechanistically, secretin released by the gut after a meal binds to secretin receptor (SCTR) in brown adipocytes, activating brown fat thermogenesis by stimulating lipolysis, which is sensed in the brain and promotes satiation. Also able to stimulate lipolysis in white adipocytes. Also plays an important role in cellular osmoregulation: released into the systemic circulation in response to hyperosmolality and acts at different levels in the hypothalamus, pituitary and kidney to regulate water homeostasis. Also plays a role in the central nervous system, possibly by acting as a neuropeptide hormone: required for hippocampal synaptic function and neural progenitor cells maintenance. This chain is Secretin, found in Oryctolagus cuniculus (Rabbit).